Consider the following 255-residue polypeptide: MKVKVFNLEGEPVEEIELPNVFATPFRPDLIRRAVIASWTHRIQPQGRDPLAGKRRVTENIGKGHGMARVERIKTSPRFAAFVPFARGGRRTHPPKVEKIIWEDINKKERRLAIMSAIAATANYDLVRARGHIVDNVPQVPLVVVNDLEKVFKTAQTREIFKKLGVWDDIERAKKNTKIRAGKGKMRGRRYKKAKGPLIVVAKNEGIVQGARNHPGVDVVTVENLGVELLAPGTHPGRLTIWTKGAIERLREIYG.

It belongs to the universal ribosomal protein uL4 family. In terms of assembly, part of the 50S ribosomal subunit.

Its function is as follows. One of the primary rRNA binding proteins, this protein initially binds near the 5'-end of the 23S rRNA. It is important during the early stages of 50S assembly. It makes multiple contacts with different domains of the 23S rRNA in the assembled 50S subunit and ribosome. Functionally, forms part of the polypeptide exit tunnel. In Thermococcus onnurineus (strain NA1), this protein is Large ribosomal subunit protein uL4.